The following is a 737-amino-acid chain: Catalase-peroxidase 2 (737 aa).

Positions 1–33 are disordered; that stretch reads MPEATEHPPIGEAQTEPAQSGCPMVIKPPVEGG. Residues 107-235 constitute a cross-link (tryptophyl-tyrosyl-methioninium (Trp-Tyr) (with M-261)); it reads WHAAGTYRVQ…LGASHMGLIY (129 aa). The Proton acceptor role is filled by His-108. The tryptophyl-tyrosyl-methioninium (Tyr-Met) (with W-107) cross-link spans 235–261; sequence YVNPEGPEGNPDPIAAAIDIRETFGRM. A heme-binding site is contributed by His-276.

Belongs to the peroxidase family. Peroxidase/catalase subfamily. Homodimer or homotetramer. Heme b serves as cofactor. Formation of the three residue Trp-Tyr-Met cross-link is important for the catalase, but not the peroxidase activity of the enzyme.

The catalysed reaction is H2O2 + AH2 = A + 2 H2O. It carries out the reaction 2 H2O2 = O2 + 2 H2O. Functionally, bifunctional enzyme with both catalase and broad-spectrum peroxidase activity. This chain is Catalase-peroxidase 2, found in Mycolicibacterium vanbaalenii (strain DSM 7251 / JCM 13017 / BCRC 16820 / KCTC 9966 / NRRL B-24157 / PYR-1) (Mycobacterium vanbaalenii).